Here is a 21-residue protein sequence, read N- to C-terminus: Alpha-fibrinogenase A1 (21 aa).

The protein belongs to the peptidase S1 family. Snake venom subfamily. In terms of assembly, monomer. As to expression, expressed by the venom gland.

The protein resides in the secreted. Inhibited by PMSF, bovine aprotinin (APR), and soybean trypsin inhibitor (STI). Is not inhibited by EDTA, beta-mercaptoethanol, and high temperature (85 degrees Celsius). Snake venom serine protease that completely cleaves fibrinogen Aalpha chain (FGA), partially cleaves Bbeta chain (FGB) and has no activity on gamma chain. Is more potent that A2 and A3 alpha-fibrinogenases. Very active within 5 minutes. The polypeptide is Alpha-fibrinogenase A1 (Crotalus atrox (Western diamondback rattlesnake)).